The sequence spans 329 residues: Holliday junction branch migration complex subunit RuvB (329 aa).

Residues 1–180 (MKNILQSTEC…FGIPIHLEFY (180 aa)) form a large ATPase domain (RuvB-L) region. ATP contacts are provided by residues Arg-20, Gly-61, Lys-64, Thr-65, Thr-66, 127-129 (EDF), Arg-170, Tyr-180, and Arg-217. Residue Thr-65 participates in Mg(2+) binding. The segment at 181-252 (STEELTKVIQ…FADKALLRLG (72 aa)) is small ATPAse domain (RuvB-S). Residues 255–329 (KLGLDRQDIQ…ISHLREQEYI (75 aa)) form a head domain (RuvB-H) region. The DNA site is built by Arg-308 and Arg-313.

The protein belongs to the RuvB family. Homohexamer. Forms an RuvA(8)-RuvB(12)-Holliday junction (HJ) complex. HJ DNA is sandwiched between 2 RuvA tetramers; dsDNA enters through RuvA and exits via RuvB. An RuvB hexamer assembles on each DNA strand where it exits the tetramer. Each RuvB hexamer is contacted by two RuvA subunits (via domain III) on 2 adjacent RuvB subunits; this complex drives branch migration. In the full resolvosome a probable DNA-RuvA(4)-RuvB(12)-RuvC(2) complex forms which resolves the HJ.

It is found in the cytoplasm. It catalyses the reaction ATP + H2O = ADP + phosphate + H(+). Functionally, the RuvA-RuvB-RuvC complex processes Holliday junction (HJ) DNA during genetic recombination and DNA repair, while the RuvA-RuvB complex plays an important role in the rescue of blocked DNA replication forks via replication fork reversal (RFR). RuvA specifically binds to HJ cruciform DNA, conferring on it an open structure. The RuvB hexamer acts as an ATP-dependent pump, pulling dsDNA into and through the RuvAB complex. RuvB forms 2 homohexamers on either side of HJ DNA bound by 1 or 2 RuvA tetramers; 4 subunits per hexamer contact DNA at a time. Coordinated motions by a converter formed by DNA-disengaged RuvB subunits stimulates ATP hydrolysis and nucleotide exchange. Immobilization of the converter enables RuvB to convert the ATP-contained energy into a lever motion, pulling 2 nucleotides of DNA out of the RuvA tetramer per ATP hydrolyzed, thus driving DNA branch migration. The RuvB motors rotate together with the DNA substrate, which together with the progressing nucleotide cycle form the mechanistic basis for DNA recombination by continuous HJ branch migration. Branch migration allows RuvC to scan DNA until it finds its consensus sequence, where it cleaves and resolves cruciform DNA. The chain is Holliday junction branch migration complex subunit RuvB from Ehrlichia chaffeensis (strain ATCC CRL-10679 / Arkansas).